The sequence spans 824 residues: C-Jun-amino-terminal kinase-interacting protein 2 (824 aa).

Disordered stretches follow at residues 1–28, 40–160, 172–349, and 361–501; these read MADRAEMFSLSTFHSLSPPGCRPPQDIS, ITDD…GFDL, CSPA…DSPW, and EGSS…APRD. Acidic residues predominate over residues 77 to 110; it reads DFQEFEMIDDNEEEDDEDEEEEEEEEEGDGEGQE. The tract at residues 110 to 275 is JNK-binding domain (JBD); the sequence is EGGDPGSEAP…RMISSISETE (166 aa). Residues 141–156 show a composition bias toward polar residues; the sequence is LRLTTLGAQDSLNNNG. The interval 239 to 498 is necessary for interaction with FGF13; that stretch reads GRGGRRSSQE…PGGRGTGPSA (260 aa). Phosphoserine occurs at positions 254, 302, and 305. Residues 268–305 show a composition bias toward low complexity; it reads ISSISETELELSSDGGSSSSGRSSHLTNSIEEASSPAS. Over residues 327-346 the composition is skewed to acidic residues; it reads TNSEYESGSESEPDLSEDAD. The segment covering 416–432 has biased composition (pro residues); sequence APPPPAPAAPRPGPAQP. The segment covering 451-467 has biased composition (low complexity); sequence AAPGRAARPGRACSAAC. The segment covering 468 to 484 has biased composition (acidic residues); that stretch reads SEEEDEEDDEEEEDAED. Residues 604–665 enclose the SH3 domain; the sequence is EREQTHRAVF…PAFYAHAVPG (62 aa). One can recognise a PID domain in the interval 677–813; that stretch reads PCWVERFDVQ…FLEYYQEHLA (137 aa).

It belongs to the JIP scaffold family. Forms homo- or heterooligomeric complexes. Binds specific components of the JNK signaling pathway namely JNK1, JNK2, JNK3, MAP2K7, MAP3K10, MAP3K11, MAP3K12 and MAPK13. Also binds the proline-rich domain-containing splice variant of apolipoprotein E receptor 2 (ApoER2). Binds the cytoplasmic tails of LRP1 and LRP2 (Megalin). Binds the TPR motif-containing C-terminal of kinesin light chain, Klc1, pre-assembled MAPK8IP1 scaffolding complexes are then transported as a cargo of kinesin, to the required subcellular location. Interacts with the cytoplasmic domain of APP. Interacts with DCLK2. Interacts with TIAM1 and TIAM2. Interacts with FGF13; enables the interaction with MAPK13 and may regulate the MAPK8IP2 scaffolding activity. Interacts with SH3RF2. As to expression, expressed mainly in the brain and pancreas, including insulin-secreting cells. In the nervous system, more abundantly expressed in the cerebellum, pituitary gland, occipital lobe and the amygdala. Also expressed in fetal brain. Very low levels found in uterus, ovary, prostate, colon, testis, adrenal gland, thyroid gland and salivary gland.

Its subcellular location is the cytoplasm. The JNK-interacting protein (JIP) group of scaffold proteins selectively mediates JNK signaling by aggregating specific components of the MAPK cascade to form a functional JNK signaling module. JIP2 inhibits IL1 beta-induced apoptosis in insulin-secreting cells. May function as a regulator of vesicle transport, through interactions with the JNK-signaling components and motor proteins. This is C-Jun-amino-terminal kinase-interacting protein 2 (MAPK8IP2) from Homo sapiens (Human).